The sequence spans 70 residues: Small ribosomal subunit protein bS21 (70 aa).

Over residues 48–61 (KLAAAVKRQSKRLR) the composition is skewed to basic residues. The disordered stretch occupies residues 48-70 (KLAAAVKRQSKRLRSQQLPPKMY).

It belongs to the bacterial ribosomal protein bS21 family.

The polypeptide is Small ribosomal subunit protein bS21 (Thiobacillus denitrificans (strain ATCC 25259 / T1)).